The following is a 1292-amino-acid chain: DNA-directed RNA polymerase subunit beta' (1292 aa).

Residues Cys70, Cys72, Cys85, and Cys88 each coordinate Zn(2+). Asp532, Asp534, and Asp536 together coordinate Mg(2+). 4 residues coordinate Zn(2+): Cys911, Cys987, Cys994, and Cys997.

This sequence belongs to the RNA polymerase beta' chain family. As to quaternary structure, the RNAP catalytic core consists of 2 alpha, 1 beta, 1 beta' and 1 omega subunit. When a sigma factor is associated with the core the holoenzyme is formed, which can initiate transcription. Mg(2+) serves as cofactor. Zn(2+) is required as a cofactor.

It catalyses the reaction RNA(n) + a ribonucleoside 5'-triphosphate = RNA(n+1) + diphosphate. Functionally, DNA-dependent RNA polymerase catalyzes the transcription of DNA into RNA using the four ribonucleoside triphosphates as substrates. This Mycoplasma genitalium (strain ATCC 33530 / DSM 19775 / NCTC 10195 / G37) (Mycoplasmoides genitalium) protein is DNA-directed RNA polymerase subunit beta'.